We begin with the raw amino-acid sequence, 274 residues long: Rhamnulose-1-phosphate aldolase (274 aa).

E117 is an active-site residue. Positions 141, 143, and 212 each coordinate Zn(2+).

This sequence belongs to the aldolase class II family. RhaD subfamily. Homotetramer. Zn(2+) is required as a cofactor.

It is found in the cytoplasm. It catalyses the reaction L-rhamnulose 1-phosphate = (S)-lactaldehyde + dihydroxyacetone phosphate. The protein operates within carbohydrate degradation; L-rhamnose degradation; glycerone phosphate from L-rhamnose: step 3/3. Its function is as follows. Catalyzes the reversible cleavage of L-rhamnulose-1-phosphate to dihydroxyacetone phosphate (DHAP) and L-lactaldehyde. The polypeptide is Rhamnulose-1-phosphate aldolase (Escherichia coli O7:K1 (strain IAI39 / ExPEC)).